The sequence spans 329 residues: Delta-aminolevulinic acid dehydratase (329 aa).

The active-site Schiff-base intermediate with substrate is the Lys-202. Arg-212 and Arg-223 together coordinate 5-aminolevulinate. Glu-239 provides a ligand contact to Mg(2+). Lys-254 functions as the Schiff-base intermediate with substrate in the catalytic mechanism. Ser-280 and Tyr-319 together coordinate 5-aminolevulinate.

The protein belongs to the ALAD family. Homooctamer.

It catalyses the reaction 2 5-aminolevulinate = porphobilinogen + 2 H2O + H(+). The protein operates within porphyrin-containing compound metabolism; protoporphyrin-IX biosynthesis; coproporphyrinogen-III from 5-aminolevulinate: step 1/4. Its function is as follows. Catalyzes an early step in the biosynthesis of tetrapyrroles. Binds two molecules of 5-aminolevulinate per subunit, each at a distinct site, and catalyzes their condensation to form porphobilinogen. The protein is Delta-aminolevulinic acid dehydratase (hemB) of Mycobacterium leprae (strain TN).